The following is a 122-amino-acid chain: UPF0382 membrane protein SAUSA300_0565 (122 aa).

4 helical membrane-spanning segments follow: residues 3-23 (LFII…AFGA), 46-66 (MYHG…SINV), 69-89 (AGWL…ILVL), and 98-118 (ITPI…IATF).

This sequence belongs to the UPF0382 family.

It is found in the cell membrane. This Staphylococcus aureus (strain USA300) protein is UPF0382 membrane protein SAUSA300_0565.